A 117-amino-acid polypeptide reads, in one-letter code: Large ribosomal subunit protein uL18 (117 aa).

The protein belongs to the universal ribosomal protein uL18 family. Part of the 50S ribosomal subunit; part of the 5S rRNA/L5/L18/L25 subcomplex. Contacts the 5S and 23S rRNAs.

Functionally, this is one of the proteins that bind and probably mediate the attachment of the 5S RNA into the large ribosomal subunit, where it forms part of the central protuberance. The protein is Large ribosomal subunit protein uL18 of Aliivibrio salmonicida (strain LFI1238) (Vibrio salmonicida (strain LFI1238)).